Here is a 37-residue protein sequence, read N- to C-terminus: Large ribosomal subunit protein bL36 (37 aa).

Belongs to the bacterial ribosomal protein bL36 family.

The chain is Large ribosomal subunit protein bL36 from Alkaliphilus metalliredigens (strain QYMF).